We begin with the raw amino-acid sequence, 212 residues long: Phosphoribosyl-dephospho-CoA transferase (212 aa).

Catalysis depends on residues D139 and D141.

Belongs to the MdcG family.

It carries out the reaction apo-[malonate decarboxylase ACP] + 2'-(5''-triphospho-alpha-D-ribosyl)-3'-dephospho-CoA = holo-[malonate decarboxylase ACP] + diphosphate. Functionally, transfers 2'-(5-triphosphoribosyl)-3'-dephosphocoenzyme-A to the apo-[acyl-carrier-protein] of the malonate decarboxylase to yield holo-[acyl-carrier-protein]. The polypeptide is Phosphoribosyl-dephospho-CoA transferase (Azotobacter vinelandii (strain DJ / ATCC BAA-1303)).